A 250-amino-acid chain; its full sequence is Precorrin-4 C(11)-methyltransferase (250 aa).

It belongs to the precorrin methyltransferase family.

It carries out the reaction precorrin-4 + S-adenosyl-L-methionine = precorrin-5 + S-adenosyl-L-homocysteine. It participates in cofactor biosynthesis; adenosylcobalamin biosynthesis; cob(II)yrinate a,c-diamide from precorrin-2 (aerobic route): step 4/10. In terms of biological role, catalyzes the methylation of C-11 in precorrin-4 to form precorrin-5. The sequence is that of Precorrin-4 C(11)-methyltransferase (cobM) from Pseudomonas aeruginosa (strain ATCC 15692 / DSM 22644 / CIP 104116 / JCM 14847 / LMG 12228 / 1C / PRS 101 / PAO1).